The sequence spans 562 residues: Beta-hexosaminidase (562 aa).

A signal peptide spans 1-22 (MVLDKMIIFHLLLWLCNVVVHA). Residues Asn-38, Asn-52, Asn-111, Asn-337, Asn-382, Asn-396, and Asn-463 are each glycosylated (N-linked (GlcNAc...) asparagine).

The protein belongs to the glycosyl hydrolase 20 family.

It catalyses the reaction Hydrolysis of terminal non-reducing N-acetyl-D-hexosamine residues in N-acetyl-beta-D-hexosaminides.. Its function is as follows. Has a broad substrate specificity. The chain is Beta-hexosaminidase (HEX1) from Candida albicans (Yeast).